A 449-amino-acid polypeptide reads, in one-letter code: Exodeoxyribonuclease 7 large subunit (449 aa).

Belongs to the XseA family. As to quaternary structure, heterooligomer composed of large and small subunits.

It localises to the cytoplasm. The catalysed reaction is Exonucleolytic cleavage in either 5'- to 3'- or 3'- to 5'-direction to yield nucleoside 5'-phosphates.. Its function is as follows. Bidirectionally degrades single-stranded DNA into large acid-insoluble oligonucleotides, which are then degraded further into small acid-soluble oligonucleotides. The protein is Exodeoxyribonuclease 7 large subunit of Salmonella schwarzengrund (strain CVM19633).